Here is an 854-residue protein sequence, read N- to C-terminus: A-kinase anchor protein 4 (854 aa).

A propeptide spanning residues M1–N188 is cleaved from the precursor. S96, S130, S190, S213, S226, and S272 each carry phosphoserine. The tract at residues N184 to S207 is disordered. Residues F219 to A232 are PKA-RI and PKA-RII subunit binding domain. Positions R287–K323 are disordered. Basic and acidic residues predominate over residues G288 to G297. Phosphoserine is present on S300. Phosphotyrosine is present on Y303. Residues S304 and S307 each carry the phosphoserine modification. Residues K311–K323 show a composition bias toward basic and acidic residues. Positions Y336–M345 are PKA-RI-alpha subunit binding domain. A phosphoserine mark is found at S342, S432, S443, S445, S447, S450, S464, and S492. At T506 the chain carries Phosphothreonine. S536, S581, S627, and S703 each carry phosphoserine.

It belongs to the AKAP110 family. In terms of assembly, interacts with PRKAR1A and PRKAR2A. Interacts with ENO4. Interacts with QRICH2. Phosphorylated by STK33 during sperm flagella assembly. As to expression, testis specific; only expressed in round spermatids.

It is found in the cell projection. Its subcellular location is the cilium. The protein localises to the flagellum. In terms of biological role, major structural component of sperm fibrous sheath. Plays a role in sperm motility. This chain is A-kinase anchor protein 4, found in Homo sapiens (Human).